We begin with the raw amino-acid sequence, 418 residues long: MALPSKAALVGLANTLSEQVKRYLATAGETKSPEDHKLCIESERTPSSNEHAQAWEIVRTCDRIGSLVHGPVPWLLSNALSHLDSACLAAATHLNLQDIIVDGPSPTSLDTIVAATGVSEDLLRRILRGCAQRFIFEEVAPDQYAHTDASKMLRVTGIHALVGFSCDEVMRSGASFSDFLQQTKGKPPSWNVPSPFSLAFDPTKGLFDYYSTVDEVRGRRFDLGMGGTEATKPLVEEMFDFSSLPEGSTVVDVGGGRGHLSRRVSQKHPHLRFIVQDLPAVIHGVEDTDKVTMMEHDIRRPNPVRGADVYLLRSILHDYPDAACVEILSNIVTAMDPSKSRILLDEMIMPDLLAQDSQRFMNQIDMTVVLTLNGKERSTKEWNSLITTVDGRLETEKIWWRKGEEGSHWGVQQLRLRK.

The propeptide occupies 1-41; the sequence is MALPSKAALVGLANTLSEQVKRYLATAGETKSPEDHKLCIE. 170 to 176 provides a ligand contact to substrate; the sequence is MRSGASF. The tract at residues 206–225 is substrate binding; that stretch reads LFDYYSTVDEVRGRRFDLGM. Residues 254 to 255, aspartate 277, 297 to 298, and arginine 313 each bind S-adenosyl-L-methionine; these read GG and DI. Histidine 317 serves as the catalytic Proton acceptor.

This sequence belongs to the class I-like SAM-binding methyltransferase superfamily. Cation-independent O-methyltransferase family. COMT subfamily.

The protein localises to the cytoplasm. It is found in the vacuole. The enzyme catalyses sterigmatocystin + S-adenosyl-L-methionine = 8-O-methylsterigmatocystin + S-adenosyl-L-homocysteine + H(+). The catalysed reaction is dihydrosterigmatocystin + S-adenosyl-L-methionine = 8-O-methyldihydrosterigmatocystin + S-adenosyl-L-homocysteine + H(+). Its pathway is mycotoxin biosynthesis; aflatoxin biosynthesis. Functionally, sterigmatocystin 8-O-methyltransferase; part of the gene cluster that mediates the biosynthesis of aflatoxins, a group of polyketide-derived furanocoumarins, and part of the most toxic and carcinogenic compounds among the known mycotoxins. The four major aflatoxins produced by A.parasiticus are aflatoxin B1 (AFB1), aflatoxin B2 (AFB2), aflatoxin G1 (AFG1) and aflatoxin G2 (AFG2). Within the aflatoxin pathway, the O-methyltransferase aflP uses both sterigmatocystin (ST) and dihydrosterigmatocystin (DHST) as substrates to yield O-methylsterigmatocystin (OMST) and dihydro-O-methylsterigmatocystin (DHOMST), respectively. The biosynthesis of aflatoxins begins with the norsolorinic acid synthase aflC that combines a hexanoyl starter unit produced by the fatty acid synthase aflA/aflB and 7 malonyl-CoA extender units to synthesize the precursor NOR. The second step is the conversion of NOR to averantin and requires the norsolorinic acid ketoreductase aflD, which catalyzes the dehydration of norsolorinic acid to form (1'S)-averantin. The norsolorinic acid reductases aflE and aflF may also play a role in the conversion of NOR to AVN. The cytochrome P450 monooxygenase aflG then catalyzes the hydroxylation of AVN to 5'hydroxyaverantin (HAVN). The next step is performed by the 5'-hydroxyaverantin dehydrogenase aflH that transforms HAVN to 5'-oxoaverantin (OAVN) which is further converted to averufin (AVF) by aflK that plays a dual role in the pathway, as a 5'-oxoaverantin cyclase that mediates conversion of 5'-oxoaverantin, as well as a versicolorin B synthase in a later step in the pathway. The averufin oxidase aflI catalyzes the conversion of AVF to versiconal hemiacetal acetate (VHA). VHA is then the substrate for the versiconal hemiacetal acetate esterase aflJ to yield versiconal (VAL). Versicolorin B synthase aflK then converts VAL to versicolorin B (VERB) by closing the bisfuran ring of aflatoxin which is required for DNA-binding, thus giving to aflatoxin its activity as a mutagen. Then, the activity of the versicolorin B desaturase aflL leads to versicolorin A (VERA). A branch point starts from VERB since it can also be converted to dihydrodemethylsterigmatocystin (DMDHST), probably also by aflL, VERA being a precursor for aflatoxins B1 and G1, and DMDHST for aflatoxins B2 and G2. Next, the versicolorin reductase aflM and the cytochrome P450 monooxygenase aflN are involved in conversion of VERA to demethylsterigmatocystin (DMST). AflX and aflY seem also involved in this step, through probable aflX-mediated epoxide ring-opening step following versicolorin A oxidation and aflY-mediated Baeyer-Villiger oxidation required for the formation of the xanthone ring. The methyltransferase aflO then leads to the modification of DMST to sterigmatocystin (ST), and of DMDHST to dihydrosterigmatocystin (DHST). Both ST and DHST are then substrates of the O-methyltransferase aflP to yield O-methylsterigmatocystin (OMST) and dihydro-O-methylsterigmatocystin (DHOMST), respectively. Finally OMST is converted to aflatoxins B1 and G1, and DHOMST to aflatoxins B2 and G2, via the action of several enzymes including O-methylsterigmatocystin oxidoreductase aflQ, the cytochrome P450 monooxygenase aflU, but also the NADH-dependent flavin oxidoreductase nadA which is specifically required for the synthesis of AFG1. This chain is Sterigmatocystin 8-O-methyltransferase, found in Aspergillus parasiticus (strain ATCC 56775 / NRRL 5862 / SRRC 143 / SU-1).